The following is a 205-amino-acid chain: Beta-crystallin B2 (205 aa).

Ala-2 is modified (N-acetylalanine). Residues 2 to 16 (ASDHQSPATKQQQPS) form an N-terminal arm region. 2 consecutive Beta/gamma crystallin 'Greek key' domains span residues 17–56 (SKIVLFEQENFQGRCHELSGPCTSLKEAGMEKIGSILVHS) and 57–101 (GPWV…RPIK). The interval 102-106 (VDSQE) is connecting peptide. Beta/gamma crystallin 'Greek key' domains follow at residues 107-148 (HKIV…RVQS) and 149-191 (GTWV…RRIR). The segment at 193–205 (MQWHQRGTFHPTN) is C-terminal arm.

The protein belongs to the beta/gamma-crystallin family. In terms of assembly, homo/heterodimer, or complexes of higher-order. The structure of beta-crystallin oligomers seems to be stabilized through interactions between the N-terminal arms. The N-terminus is blocked.

In terms of biological role, crystallins are the dominant structural components of the vertebrate eye lens. The polypeptide is Beta-crystallin B2 (Aquarana catesbeiana (American bullfrog)).